The chain runs to 512 residues: Histidine ammonia-lyase (512 aa).

Residues 143–145 constitute a cross-link (5-imidazolinone (Ala-Gly)); sequence ASG. Serine 144 carries the 2,3-didehydroalanine (Ser) modification.

The protein belongs to the PAL/histidase family. In terms of processing, contains an active site 4-methylidene-imidazol-5-one (MIO), which is formed autocatalytically by cyclization and dehydration of residues Ala-Ser-Gly.

The protein resides in the cytoplasm. The catalysed reaction is L-histidine = trans-urocanate + NH4(+). Its pathway is amino-acid degradation; L-histidine degradation into L-glutamate; N-formimidoyl-L-glutamate from L-histidine: step 1/3. The protein is Histidine ammonia-lyase of Ruegeria pomeroyi (strain ATCC 700808 / DSM 15171 / DSS-3) (Silicibacter pomeroyi).